The chain runs to 180 residues: Hypoxanthine-guanine phosphoribosyltransferase (180 aa).

Diphosphate-binding residues include K43 and G44. Residues E99 and D100 each coordinate Mg(2+). D103 (proton acceptor) is an active-site residue. Residues K131, 152 to 153 (FI), and D159 each bind GMP. R165 lines the diphosphate pocket.

The protein belongs to the purine/pyrimidine phosphoribosyltransferase family. The cofactor is Mg(2+).

Its subcellular location is the cytoplasm. It catalyses the reaction IMP + diphosphate = hypoxanthine + 5-phospho-alpha-D-ribose 1-diphosphate. The catalysed reaction is GMP + diphosphate = guanine + 5-phospho-alpha-D-ribose 1-diphosphate. It participates in purine metabolism; IMP biosynthesis via salvage pathway; IMP from hypoxanthine: step 1/1. Its pathway is purine metabolism; GMP biosynthesis via salvage pathway; GMP from guanine: step 1/1. In terms of biological role, purine salvage pathway enzyme that catalyzes the transfer of the ribosyl-5-phosphate group from 5-phospho-alpha-D-ribose 1-diphosphate (PRPP) to the N9 position of the 6-oxopurines hypoxanthine and guanine to form the corresponding ribonucleotides IMP (inosine 5'-monophosphate) and GMP (guanosine 5'-monophosphate), with the release of PPi. The protein is Hypoxanthine-guanine phosphoribosyltransferase (hpt) of Streptococcus pyogenes serotype M3 (strain ATCC BAA-595 / MGAS315).